The primary structure comprises 186 residues: MSARDVISKGEAKMKKSIESFQHEIASVRTGKATTALLDRVKVDAYGQQMPLKQVGNVGVQDAHTLMVQVWDKSMVAATEKAIRDANLGLNPAAEGQSIRVSIPPLTEERRKEYVKLTRKYSEDSKVALRNLRREILHALDKLEKDKQISEDEKSRGKKDADDLVHKYEKRILDIVGQKEKEIMEV.

It belongs to the RRF family.

The protein resides in the cytoplasm. Functionally, responsible for the release of ribosomes from messenger RNA at the termination of protein biosynthesis. May increase the efficiency of translation by recycling ribosomes from one round of translation to another. This chain is Ribosome-recycling factor, found in Prosthecochloris aestuarii (strain DSM 271 / SK 413).